A 512-amino-acid polypeptide reads, in one-letter code: Tyrosine-protein kinase Lyn (512 aa).

The interval 1–50 is disordered; sequence MGCIKSKRKDNLNDDGVDMKTQPVRNTDRTIYVRDPTSNKQQRPVPESQL. The N-myristoyl glycine moiety is linked to residue Gly2. Cys3 carries S-palmitoyl cysteine lipidation. The 61-residue stretch at 63–123 folds into the SH3 domain; that stretch reads EQGDIVVALY…PSNYVAKVNT (61 aa). The 98-residue stretch at 129–226 folds into the SH2 domain; sequence WFFKDITRKD…GLCRRLEKAC (98 aa). Phosphotyrosine is present on Tyr193. Position 228 is a phosphoserine (Ser228). The 255-residue stretch at 247-501 folds into the Protein kinase domain; that stretch reads IKLVKKLGAG…YLQSVLDDFY (255 aa). ATP-binding positions include 253–261 and Lys275; that span reads LGAGQFGEV. Tyr306 and Tyr316 each carry phosphotyrosine. Residue Asp367 is the Proton acceptor of the active site. At Tyr397 the chain carries Phosphotyrosine; by autocatalysis. Phosphotyrosine occurs at positions 460 and 473. Tyr508 bears the Phosphotyrosine; by autocatalysis, CSK and MATK mark.

This sequence belongs to the protein kinase superfamily. Tyr protein kinase family. SRC subfamily. In terms of assembly, interacts with TEC. Interacts (via SH2 domain) with FLT3 (tyrosine phosphorylated). Interacts with LIME1 and with CD79A upon activation of the B-cell antigen receptor. Interacts with the B-cell receptor complex. Interacts with phosphorylated THEMIS2. Interacts with EPOR. Interacts with MS4A2/FCER1B. Interaction (via the SH2 and SH3 domains) with MUC1 is stimulated by IL7 and the subsequent phosphorylation increases the binding between MUC1 and CTNNB1/beta-catenin. Interacts with ADAM15. Interacts with NDFIP2 and more weakly with NDFIP1. Interacts with FASLG. Interacts with KIT. Interacts with HCLS1. Interacts with FCGR2B. Interacts with FCGR1A; the interaction may be indirect. Interacts with CD19, CD22, CD79A and CD79B. Interacts (via SH3 domain) with CBLC, PPP1R15A and PDE4A. Interacts with TGFB1I1. Interacts (via SH3 domain) with PIK3R1, the regulatory subunit of phosphatidylinositol 3-kinase; this interaction enhances phosphatidylinositol 3-kinase activity. Interacts with CSF2RB, the common subunit of the IL3, IL5 and CSF2 receptors. Interacts with PAG1; identified in a complex with PAG1 and STAT3. Interacts with ABL1. Interacts with PTPN6/SHP-1. Interacts (via SH3 domain) with SCIMP (via proline-rich region). This interaction facilitates the phosphorylation of SCIMP 'Tyr-96', which enhances binding of SCIMP to TLR4, and consequently the phosphorylation of TLR4 in response to stimulation by lipopolysaccharide in macrophages. Interacts with LPXN (via LD motif 3) and the interaction is induced upon B-cell antigen receptor (BCR) activation. Interacts (via SH3-domain) with ANKRD54 (via ankyrin repeat region) in an activation-independent status of LYN. Forms a multiprotein complex with ANKRD54 and HCLS1. Interacts (via SH2 and SH3 domains) with UNC119; leading to LYN activation. Interacts with CD36. Interacts with LYN. Interacts with SKAP1 and FYB1; this interaction promotes the phosphorylation of CLNK. Interacts with BCAR1/CAS and NEDD9/HEF1. Ubiquitinated. Ubiquitination is SH3-dependent. In terms of processing, autophosphorylated. Phosphorylated on tyrosine residues in response to KIT signaling. Phosphorylation at Tyr-397 is required for optimal activity. Phosphorylation at Tyr-508 inhibits kinase activity. Phosphorylated at Tyr-508 by CSK. Dephosphorylated by PTPRC/CD45. Becomes rapidly phosphorylated upon activation of the B-cell receptor and the immunoglobulin receptor FCGR1A. Phosphorylated in response to integrin ITGB1 in B-cells. As to expression, detected in spleen (at protein level). Expressed predominantly in B-lymphoid and myeloid cells.

The protein localises to the cell membrane. The protein resides in the nucleus. It localises to the cytoplasm. It is found in the perinuclear region. Its subcellular location is the golgi apparatus. The protein localises to the membrane. It carries out the reaction L-tyrosyl-[protein] + ATP = O-phospho-L-tyrosyl-[protein] + ADP + H(+). Subject to autoinhibition, mediated by intramolecular interactions between the SH2 domain and the C-terminal phosphotyrosine. Phosphorylation at Tyr-397 is required for optimal activity. Phosphorylated by CSK at Tyr-508; phosphorylation at Tyr-508 inhibits kinase activity. Kinase activity is modulated by dephosphorylation by PTPRC/CD45. Its function is as follows. Non-receptor tyrosine-protein kinase that transmits signals from cell surface receptors and plays an important role in the regulation of innate and adaptive immune responses, hematopoiesis, responses to growth factors and cytokines, integrin signaling, but also responses to DNA damage and genotoxic agents. Functions primarily as negative regulator, but can also function as activator, depending on the context. Required for the initiation of the B-cell response, but also for its down-regulation and termination. Plays an important role in the regulation of B-cell differentiation, proliferation, survival and apoptosis, and is important for immune self-tolerance. Acts downstream of several immune receptors, including the B-cell receptor, CD79A, CD79B, CD5, CD19, CD22, FCER1, FCGR2, FCGR1A, TLR2 and TLR4. Plays a role in the inflammatory response to bacterial lipopolysaccharide. Mediates the responses to cytokines and growth factors in hematopoietic progenitors, platelets, erythrocytes, and in mature myeloid cells, such as dendritic cells, neutrophils and eosinophils. Acts downstream of EPOR, KIT, MPL, the chemokine receptor CXCR4, as well as the receptors for IL3, IL5 and CSF2. Plays an important role in integrin signaling. Regulates cell proliferation, survival, differentiation, migration, adhesion, degranulation, and cytokine release. Involved in the regulation of endothelial activation, neutrophil adhesion and transendothelial migration. Down-regulates signaling pathways by phosphorylation of immunoreceptor tyrosine-based inhibitory motifs (ITIM), that then serve as binding sites for phosphatases, such as PTPN6/SHP-1, PTPN11/SHP-2 and INPP5D/SHIP-1, that modulate signaling by dephosphorylation of kinases and their substrates. Phosphorylates LIME1 in response to CD22 activation. Phosphorylates BTK, CBL, CD5, CD19, CD72, CD79A, CD79B, CSF2RB, DOK1, HCLS1, LILRB3/PIR-B, MS4A2/FCER1B, SYK and TEC. Promotes phosphorylation of SIRPA, PTPN6/SHP-1, PTPN11/SHP-2 and INPP5D/SHIP-1. Required for rapid phosphorylation of FER in response to FCER1 activation. Mediates KIT phosphorylation. Acts as an effector of EPOR (erythropoietin receptor) in controlling KIT expression and may play a role in erythroid differentiation during the switch between proliferation and maturation. Depending on the context, activates or inhibits several signaling cascades. Regulates phosphatidylinositol 3-kinase activity and AKT1 activation. Regulates activation of the MAP kinase signaling cascade, including activation of MAP2K1/MEK1, MAPK1/ERK2, MAPK3/ERK1, MAPK8/JNK1 and MAPK9/JNK2. Mediates activation of STAT5A and/or STAT5B. Phosphorylates LPXN on 'Tyr-72'. Kinase activity facilitates TLR4-TLR6 heterodimerization and signal initiation. Phosphorylates SCIMP on 'Tyr-96'; this enhances binding of SCIMP to TLR4, promoting the phosphorylation of TLR4, and a selective cytokine response to lipopolysaccharide in macrophages. Phosphorylates CLNK. Phosphorylates BCAR1/CAS and NEDD9/HEF1. The chain is Tyrosine-protein kinase Lyn (Lyn) from Rattus norvegicus (Rat).